The primary structure comprises 534 residues: tRNA uridine(34) acetyltransferase (534 aa).

The radical S-adenosyl-L-methionine (rSAM) stretch occupies residues 70 to 330; the sequence is KPVRTISGVA…GEFKPYREEE (261 aa). The Radical SAM core domain maps to 73–344; the sequence is RTISGVAVVA…ISYAKSIMPK (272 aa). [4Fe-4S] cluster contacts are provided by C90, C95, and C98. Residue K150 participates in acetyl-CoA binding. Cysteines 384 and 389 form a disulfide. An N-acetyltransferase domain is found at 387 to 534; the sequence is IRCREVGHVY…RVGAYMGKEL (148 aa). Residues 461–464, 485–487, and Y518 each bind acetyl-CoA; these read QLHV and YGR.

This sequence belongs to the ELP3 family. It depends on [4Fe-4S] cluster as a cofactor.

The catalysed reaction is uridine(34) in tRNA + acetyl-CoA + S-adenosyl-L-methionine + H2O = 5-(carboxymethyl)uridine(34) in tRNA + 5'-deoxyadenosine + L-methionine + CoA + 2 H(+). The protein operates within tRNA modification. Functionally, tRNA uridine(34) acetyltransferase, which mediates formation of carboxymethyluridine in the wobble base at position 34 in tRNAs. The proposed mechanism is the following: (i) recruits S-adenosyl-L-methionine and cleaves it to generate a 5'-deoxyadenosine radical (5'-dA) in the radical S-adenosyl-L-methionine (rSAM) region, (ii) hydrolyzes acetyl-CoA in the N-acetyltransferase domain and (iii) an acetyl radical is formed by the products of the two domains and (iv) is transferred onto the C5 position of uridine(34) in the bound tRNA molecule. Does not show protein lysine acetyltransferase activity. The sequence is that of tRNA uridine(34) acetyltransferase from Methanocaldococcus infernus (strain DSM 11812 / JCM 15783 / ME).